Here is a 216-residue protein sequence, read N- to C-terminus: Guanylate kinase (216 aa).

The Guanylate kinase-like domain occupies 12-191; it reads GLLFVISSPS…CVKQVKNILT (180 aa). 19-26 is a binding site for ATP; sequence SPSGAGKS.

Belongs to the guanylate kinase family.

It localises to the cytoplasm. The enzyme catalyses GMP + ATP = GDP + ADP. Its function is as follows. Essential for recycling GMP and indirectly, cGMP. The chain is Guanylate kinase from Zymomonas mobilis subsp. mobilis (strain ATCC 31821 / ZM4 / CP4).